The primary structure comprises 206 residues: Small ribosomal subunit protein uS4 (206 aa).

The region spanning 96 to 156 (GRLDNVVYRM…EKAKKQSRVK (61 aa)) is the S4 RNA-binding domain.

This sequence belongs to the universal ribosomal protein uS4 family. As to quaternary structure, part of the 30S ribosomal subunit. Contacts protein S5. The interaction surface between S4 and S5 is involved in control of translational fidelity.

One of the primary rRNA binding proteins, it binds directly to 16S rRNA where it nucleates assembly of the body of the 30S subunit. In terms of biological role, with S5 and S12 plays an important role in translational accuracy. This Salmonella agona (strain SL483) protein is Small ribosomal subunit protein uS4.